The primary structure comprises 116 residues: Large ribosomal subunit protein bL17 (116 aa).

This sequence belongs to the bacterial ribosomal protein bL17 family. Part of the 50S ribosomal subunit. Contacts protein L32.

This is Large ribosomal subunit protein bL17 from Dictyoglomus thermophilum (strain ATCC 35947 / DSM 3960 / H-6-12).